A 328-amino-acid chain; its full sequence is Endochitinase (328 aa).

The N-terminal stretch at 1–27 is a signal peptide; sequence MKKNRMMMMIWSVGVVWMLLLVGGSYG. A Chitin-binding type-1 domain is found at 28–68; that stretch reads EQCGRQAGGALCPGGNCCSQFGWCGSTTDYCGPGCQSQCGG. Cystine bridges form between Cys30/Cys45, Cys39/Cys51, Cys44/Cys58, Cys62/Cys66, Cys97/Cys159, Cys170/Cys178, and Cys277/Cys309. Glu141 functions as the Proton donor in the catalytic mechanism. Positions 318–328 are cleaved as a propeptide — removed in mature form; the sequence is SLLLSDLVTSQ.

Belongs to the glycosyl hydrolase 19 family. Chitinase class I subfamily.

It localises to the vacuole. It carries out the reaction Random endo-hydrolysis of N-acetyl-beta-D-glucosaminide (1-&gt;4)-beta-linkages in chitin and chitodextrins.. Functionally, defense against chitin-containing fungal pathogens. The polypeptide is Endochitinase (Phaseolus vulgaris (Kidney bean)).